The primary structure comprises 195 residues: Holliday junction branch migration complex subunit RuvA (195 aa).

The interval 1-64 (MIGRIAGLLL…EDAHLLFGFM (64 aa)) is domain I. Residues 65–140 (TEPERVLFRQ…KISPAITLPE (76 aa)) form a domain II region. A flexible linker region spans residues 140-144 (ETGTA). Positions 145–195 (MASSTDKDILNALSALGYNDREANWAVGQLSEGVTVSDGIMQSLRLLSKAK) are domain III.

The protein belongs to the RuvA family. As to quaternary structure, homotetramer. Forms an RuvA(8)-RuvB(12)-Holliday junction (HJ) complex. HJ DNA is sandwiched between 2 RuvA tetramers; dsDNA enters through RuvA and exits via RuvB. An RuvB hexamer assembles on each DNA strand where it exits the tetramer. Each RuvB hexamer is contacted by two RuvA subunits (via domain III) on 2 adjacent RuvB subunits; this complex drives branch migration. In the full resolvosome a probable DNA-RuvA(4)-RuvB(12)-RuvC(2) complex forms which resolves the HJ.

It is found in the cytoplasm. Functionally, the RuvA-RuvB-RuvC complex processes Holliday junction (HJ) DNA during genetic recombination and DNA repair, while the RuvA-RuvB complex plays an important role in the rescue of blocked DNA replication forks via replication fork reversal (RFR). RuvA specifically binds to HJ cruciform DNA, conferring on it an open structure. The RuvB hexamer acts as an ATP-dependent pump, pulling dsDNA into and through the RuvAB complex. HJ branch migration allows RuvC to scan DNA until it finds its consensus sequence, where it cleaves and resolves the cruciform DNA. The polypeptide is Holliday junction branch migration complex subunit RuvA (Nitrosomonas europaea (strain ATCC 19718 / CIP 103999 / KCTC 2705 / NBRC 14298)).